A 906-amino-acid chain; its full sequence is MQHIFAFFCTGFLGAVVGANFPNNIQIGGLFPNQQSQEHAAFRFALSQLTEPPKLLPQIDIVNISDSFEMTYRFCSQFSKGVYAIFGFYERRTVNMLTSFCGALHVCFITPSFPVDTSNQFVLQLRPELQDALISIIDHYKWQKFVYIYDADRGLSVLQKVLDTAAEKNWQVTAVNILTTTEEGYRMLFQDLEKKKERLVVVDCESERLNAILGQIIKLEKNGIGYHYILANLGFMDIDLNKFKESGANVTGFQLVNYTDTIPAKIMQQWKNSDARDHTRVDWKRPKYTSALTYDGVKVMAEAFQSLRRQRIDISRRGNAGDCLANPAVPWGQGIDIQRALQQVRFEGLTGNVQFNEKGRRTNYTLHVIEMKHDGIRKIGYWNEDDKFVPAATDAQAGGDNSSVQNRTYIVTTILEDPYVMLKKNANQFEGNDRYEGYCVELAAEIAKHVGYSYRLEIVSDGKYGARDPDTKAWNGMVGELVYGRADVAVAPLTITLVREEVIDFSKPFMSLGISIMIKKPQKSKPGVFSFLDPLAYEIWMCIVFAYIGVSVVLFLVSRFSPYEWHSEEFEEGRDQTTSDQSNEFGIFNSLWFSLGAFMQQGCDISPRSLSGRIVGGVWWFFTLIIISSYTANLAAFLTVERMVSPIESAEDLAKQTEIAYGTLEAGSTKEFFRRSKIAVFEKMWTYMKSAEPSVFVRTTEEGMIRVRKSKGKYAYLLESTMNEYIEQRKPCDTMKVGGNLDSKGYGIATPKGSALRNPVNLAVLKLNEQGLLDKLKNKWWYDKGECGSGGGDSKDKTSALSLSNVAGVFYILIGGLGLAMLVALIEFCYKSRSESKRMKGFCLIPQQSINEAIRTSTLPRNSGAGASSGGSGENGRVVSHDFPKSMQSIPCMSHSSGMPLGATGL.

An N-terminal signal peptide occupies residues 1–18; sequence MQHIFAFFCTGFLGAVVG. The Extracellular portion of the chain corresponds to 19 to 536; that stretch reads ANFPNNIQIG…GVFSFLDPLA (518 aa). N-linked (GlcNAc...) asparagine glycosylation is found at Asn63, Asn249, Asn257, Asn363, Asn401, and Asn406. Cys75 and Cys323 are joined by a disulfide. The L-glutamate site is built by Pro492, Thr494, and Arg499. A helical transmembrane segment spans residues 537–557; the sequence is YEIWMCIVFAYIGVSVVLFLV. Topologically, residues 558 to 584 are cytoplasmic; the sequence is SRFSPYEWHSEEFEEGRDQTTSDQSNE. The segment at residues 585–600 is an intramembrane region (helical; Pore-forming); the sequence is FGIFNSLWFSLGAFMQ. Residues 601–603 lie within the membrane without spanning it; sequence QGC. A lipid anchor (S-palmitoyl cysteine) is attached at Cys603. The Cytoplasmic segment spans residues 604-609; that stretch reads DISPRS. The chain crosses the membrane as a helical span at residues 610-630; sequence LSGRIVGGVWWFFTLIIISSY. Topologically, residues 631–805 are extracellular; it reads TANLAAFLTV…DKTSALSLSN (175 aa). At Ser645 the chain carries Phosphoserine. 2 residues coordinate L-glutamate: Ser668 and Thr669. Ser710 carries the phosphoserine modification. L-glutamate is bound at residue Glu719. Residues Cys732 and Cys787 are joined by a disulfide bond. Residues 806–826 traverse the membrane as a helical segment; that stretch reads VAGVFYILIGGLGLAMLVALI. Residues 827-906 are Cytoplasmic-facing; the sequence is EFCYKSRSES…SGMPLGATGL (80 aa). Cys829 carries S-palmitoyl cysteine lipidation. 2 positions are modified to phosphoserine: Ser849 and Ser863. Residues 861–880 form a disordered region; sequence RNSGAGASSGGSGENGRVVS. The PDZ-binding signature appears at 903 to 906; sequence ATGL.

This sequence belongs to the glutamate-gated ion channel (TC 1.A.10.1) family. GRIA1 subfamily. Homotetramer or heterotetramer of pore-forming glutamate receptor subunits; heteromeric assembly can be the result of both receptor subtype and flip or flop form and according the composition, one partner can be dominant with respect to the fast desensitizing current component, whereas the other can determine the steady-state component. Tetramers may be formed by the dimerization of dimers. Found in a complex with GRIA2, GRIA3, GRIA4, CNIH2, CNIH3, CACNG2, CACNG3, CACNG4, CACNG5, CACNG7 and CACNG8. Interacts with HIP1 and RASGRF2. Interacts with SYNDIG1 and GRIA2. Interacts with DLG1 (via C-terminus). Interacts with LRFN1. Interacts with PRKG2. Interacts with CNIH2 and CACNG2. Interacts with CACNG5; this interaction modulates the gating. Interacts (via C-terminus) with PDLIM4 (via LIM domain); this interaction as well as the interaction of PDLIM4 with alpha-actinin is required for their colocalization in early endosomes. Interacts with SNX27 (via PDZ domain); the interaction is required for recycling to the plasma membrane when endocytosed and prevent degradation in lysosomes. Interacts (via PDZ-binding motif) with SHANK3 (via PDZ domain). Interacts with CACNG3; associates GRIA1 with the adapter protein complex 4 (AP-4) to target GRIA1 to the somatodendritic compartment of neurons. Interacts with CACNG2; this interaction mediates traffick to the plasma membrane and modulation of desensitization. Interacts with CNIH2 and CNIH3; this interaction promotes expression at the plasma membrane and extensively modulates their gating properties by slowing deactivation and desensitization kinetics. Found in a complex with GRIA2, GRIA3, GRIA4, DLG4, CACNG8 and CNIH2. Palmitoylated. Depalmitoylated by CPT1C and upon L-glutamate stimulation. ZDHHC3/GODZ specifically palmitoylates Cys-603, which leads to Golgi retention and decreased cell surface expression. In contrast, Cys-829 palmitoylation does not affect cell surface expression but regulates stimulation-dependent endocytosis. In terms of processing, phosphorylated at Ser-645. Phosphorylated at Ser-710 by PKC. Phosphorylated at Ser-849 by PKC, PKA and CAMK2. Phosphorylated at Ser-863 by PKC, PKA and PRKG2. Phosphorylation of Ser-863 is reduced by induction of long-term depression and increased by induction of long-term potentiation. As to expression, widely expressed in brain.

The protein resides in the cell membrane. It is found in the endoplasmic reticulum membrane. The protein localises to the postsynaptic cell membrane. It localises to the postsynaptic density membrane. Its subcellular location is the cell projection. The protein resides in the dendrite. It is found in the dendritic spine. The protein localises to the early endosome membrane. It localises to the recycling endosome membrane. Its subcellular location is the presynapse. The protein resides in the synapse. It catalyses the reaction Ca(2+)(in) = Ca(2+)(out). It carries out the reaction Na(+)(in) = Na(+)(out). The catalysed reaction is Mg(2+)(in) = Mg(2+)(out). The enzyme catalyses Li(+)(in) = Li(+)(out). It catalyses the reaction K(+)(in) = K(+)(out). It carries out the reaction Sr(2+)(in) = Sr(2+)(out). Functionally, ionotropic glutamate receptor that functions as a ligand-gated cation channel, gated by L-glutamate and glutamatergic agonists such as alpha-amino-3-hydroxy-5-methyl-4-isoxazolepropionic acid (AMPA), quisqualic acid, and kainic acid. L-glutamate acts as an excitatory neurotransmitter at many synapses in the central nervous system. Binding of the excitatory neurotransmitter L-glutamate induces a conformation change, leading to the opening of the cation channel, and thereby converts the chemical signal to an electrical impulse upon entry of monovalent and divalent cations such as sodium and calcium. The receptor then desensitizes rapidly and enters in a transient inactive state, characterized by the presence of bound agonist. In the presence of CACNG2 or CACNG4 or CACNG7 or CACNG8, shows resensitization which is characterized by a delayed accumulation of current flux upon continued application of L-glutamate. Resensitization is blocked by CNIH2 through interaction with CACNG8 in the CACNG8-containing AMPA receptors complex. Calcium (Ca(2+)) permeability depends on subunits composition and, heteromeric channels containing edited GRIA2 subunit are calcium-impermeable. Also permeable to other divalents cations such as strontium(2+) and magnesium(2+) and monovalent cations such as potassium(1+) and lithium(1+). This chain is Glutamate receptor 1, found in Homo sapiens (Human).